The chain runs to 56 residues: Ovomucoid (56 aa).

The region spanning 6 to 56 (VDCSEYPKPACTLEHRPLCGSDNKTYGNKCNFCNAVVESNGTLTLSHFGKC) is the Kazal-like domain. 3 disulfides stabilise this stretch: Cys-8-Cys-38, Cys-16-Cys-35, and Cys-24-Cys-56. Asn-45 carries N-linked (GlcNAc...) asparagine glycosylation.

The protein localises to the secreted. The sequence is that of Ovomucoid from Pavo cristatus (Indian peafowl).